A 350-amino-acid chain; its full sequence is tRNA uridine(34) hydroxylase (350 aa).

Residues 146–240 form the Rhodanese domain; the sequence is DDPDAVFIDM…YARRAREQGL (95 aa). Cys-200 acts as the Cysteine persulfide intermediate in catalysis. A compositionally biased stretch (basic and acidic residues) spans 319–328; it reads RRRRAGRENG. Residues 319–350 are disordered; that stretch reads RRRRAGRENGNKIFNKSRGRLNSKLSIPDPAE.

It belongs to the TrhO family.

It carries out the reaction uridine(34) in tRNA + AH2 + O2 = 5-hydroxyuridine(34) in tRNA + A + H2O. In terms of biological role, catalyzes oxygen-dependent 5-hydroxyuridine (ho5U) modification at position 34 in tRNAs. The chain is tRNA uridine(34) hydroxylase from Salmonella dublin (strain CT_02021853).